Reading from the N-terminus, the 421-residue chain is Proton extrusion protein PxcA (421 aa).

Residues 124–153 are disordered; sequence PTVHSSNPDDSQLMTSKNNSKPVPDPESDD. Residues 125–144 are compositionally biased toward polar residues; the sequence is TVHSSNPDDSQLMTSKNNSK. 4 helical membrane passes run 203 to 223, 298 to 318, 345 to 365, and 381 to 401; these read FVLLLVLVPLLTQQISKSFIV, AIKNIFADLISAAAFAILLIS, IIILFTDIFVGFHSPHGWEVI, and FIFLFIATFPVILDTIFKYWI.

Belongs to the CemA family.

It localises to the cell inner membrane. In terms of biological role, required for H(+) efflux immediately after light irradiation to form a rapid H(+) concentration gradient across the thylakoid membranes. Together with PxcL, contributes to transient H(+) uptake following dark to light transition. The polypeptide is Proton extrusion protein PxcA (Synechococcus sp. (strain ATCC 27144 / PCC 6301 / SAUG 1402/1) (Anacystis nidulans)).